Here is a 475-residue protein sequence, read N- to C-terminus: Putative aldehyde dehydrogenase SH0913 (475 aa).

201–207 (GDGEGVG) contacts NAD(+). Residues Glu245 and Cys279 contribute to the active site.

This sequence belongs to the aldehyde dehydrogenase family.

It carries out the reaction an aldehyde + NAD(+) + H2O = a carboxylate + NADH + 2 H(+). The polypeptide is Putative aldehyde dehydrogenase SH0913 (Staphylococcus haemolyticus (strain JCSC1435)).